Here is a 277-residue protein sequence, read N- to C-terminus: Myelin proteolipid protein (277 aa).

Residues 1–10 (MGLLECCARC) lie on the Cytoplasmic side of the membrane. S-palmitoyl cysteine attachment occurs at residues C6, C7, and C10. Residues 11–36 (LVGAPFASLVATGLCFFGVALFCGCG) traverse the membrane as a helical segment. Residues 37–59 (HEALTGTEKLIETYFSKNYQDYE) are Extracellular-facing. Residues 60-88 (YLINVIHAFQYVIYGTASFFFLYGALLLA) form a helical membrane-spanning segment. The Cytoplasmic segment spans residues 89–151 (EGFYTTGAVR…LGKWLGHPDK (63 aa)). A lipid anchor (S-palmitoyl cysteine) is attached at C109. Residue S114 is modified to Phosphoserine. Phosphothreonine occurs at positions 116 and 118. S-palmitoyl cysteine attachment occurs at residues C139 and C141. Residues 152–178 (FVGITYALTIVWLLVFACSAVPVYIYF) form a helical membrane-spanning segment. Over 179-238 (NTWTTCQSIAFPSKTSASIGSLCADARMYGVLPWNAFPGKVCGSNLLSICKTAEFQMTFH) the chain is Extracellular. Intrachain disulfides connect C184–C228 and C201–C220. A lipid anchor (O-palmitoyl serine) is attached at S199. A helical membrane pass occupies residues 239–268 (LFIAAFVGAAATLVSLLTFMIAATYNFAVL). The Cytoplasmic segment spans residues 269–277 (KLMGRGTKF).

This sequence belongs to the myelin proteolipid protein family.

The protein localises to the cell membrane. The protein resides in the myelin membrane. Its function is as follows. This is the major myelin protein from the central nervous system. It plays an important role in the formation or maintenance of the multilamellar structure of myelin. This Canis lupus familiaris (Dog) protein is Myelin proteolipid protein (PLP1).